Reading from the N-terminus, the 83-residue chain is Mu-theraphotoxin-Hhn2o (83 aa).

The signal sequence occupies residues 1 to 21 (MKASMFLALAGLVLLFVVGYA). A propeptide spanning residues 22 to 48 (SESEEKEFPIELLSKIFAVDVFKGEER) is cleaved from the precursor. Disulfide bonds link C50–C65, C57–C70, and C64–C77. L81 is modified (leucine amide).

The protein belongs to the neurotoxin 10 (Hwtx-1) family. 15 (Hntx-3) subfamily. In terms of assembly, monomer. Expressed by the venom gland.

The protein localises to the secreted. Functionally, lethal neurotoxin. Selectively blocks tetrodotoxin-sensitive voltage-gated sodium channels (Nav). Does not affect tetrodotoxin-resistant voltage-gated sodium channels or calcium channels. In Cyriopagopus hainanus (Chinese bird spider), this protein is Mu-theraphotoxin-Hhn2o.